The following is a 395-amino-acid chain: MRN complex-interacting protein (395 aa).

Positions 90–100 (DPKSEQEEAHV) are enriched in basic and acidic residues. 2 disordered regions span residues 90–155 (DPKS…GGNC) and 180–275 (KRSS…FGES). A compositionally biased stretch (polar residues) spans 104 to 113 (SKYTDQTTEG). Residues 117-127 (EKDDEDEDENV) are compositionally biased toward acidic residues. Positions 142–145 (RKKM) match the Nuclear localization signal (NLS) motif. The span at 183 to 195 (SSSWNKGSVSKYS) shows a compositional bias: low complexity. Composition is skewed to polar residues over residues 224 to 244 (ACSS…QIKS) and 260 to 270 (QSESPSVSSHQ).

Belongs to the MRNIP family.

The protein localises to the nucleus. The protein resides in the nucleoplasm. Its function is as follows. Plays a role in the cellular response to DNA damage and the maintenance of genome stability through its association with the MRN damage-sensing complex. Promotes chromatin loading and activity of the MRN complex to facilitate subsequent ATM-mediated DNA damage response signaling and DNA repair. This chain is MRN complex-interacting protein, found in Danio rerio (Zebrafish).